Here is a 477-residue protein sequence, read N- to C-terminus: UDP-N-acetylmuramoylalanine--D-glutamate ligase (477 aa).

127-133 lines the ATP pocket; sequence GTNGKTT.

This sequence belongs to the MurCDEF family.

Its subcellular location is the cytoplasm. The enzyme catalyses UDP-N-acetyl-alpha-D-muramoyl-L-alanine + D-glutamate + ATP = UDP-N-acetyl-alpha-D-muramoyl-L-alanyl-D-glutamate + ADP + phosphate + H(+). It functions in the pathway cell wall biogenesis; peptidoglycan biosynthesis. Its function is as follows. Cell wall formation. Catalyzes the addition of glutamate to the nucleotide precursor UDP-N-acetylmuramoyl-L-alanine (UMA). The protein is UDP-N-acetylmuramoylalanine--D-glutamate ligase of Prochlorococcus marinus (strain MIT 9515).